The following is a 242-amino-acid chain: 1-(5-phosphoribosyl)-5-[(5-phosphoribosylamino)methylideneamino] imidazole-4-carboxamide isomerase (242 aa).

Catalysis depends on D10, which acts as the Proton acceptor. The active-site Proton donor is the D132.

It belongs to the HisA/HisF family.

Its subcellular location is the cytoplasm. It catalyses the reaction 1-(5-phospho-beta-D-ribosyl)-5-[(5-phospho-beta-D-ribosylamino)methylideneamino]imidazole-4-carboxamide = 5-[(5-phospho-1-deoxy-D-ribulos-1-ylimino)methylamino]-1-(5-phospho-beta-D-ribosyl)imidazole-4-carboxamide. It participates in amino-acid biosynthesis; L-histidine biosynthesis; L-histidine from 5-phospho-alpha-D-ribose 1-diphosphate: step 4/9. The chain is 1-(5-phosphoribosyl)-5-[(5-phosphoribosylamino)methylideneamino] imidazole-4-carboxamide isomerase from Streptococcus sanguinis (strain SK36).